Consider the following 651-residue polypeptide: Mitochondrial sodium/calcium exchanger protein (651 aa).

The helical transmembrane segment at 51 to 71 (VILIILGILYLIILFVIMSSI) threads the bilayer. The Cytoplasmic portion of the chain corresponds to 72–91 (ADDFFCPAISGIVSHLRMSE). Residues 92–112 (SIAGVTFLAFGNGAPDVFSSI) traverse the membrane as a helical segment. Topologically, residues 113–126 (SSVLTTPKPKADLA) are extracellular. The helical transmembrane segment at 127–147 (LGDLFGTSIFVTTVVLAIIIF) threads the bilayer. The Cytoplasmic portion of the chain corresponds to 148-161 (TKSFKVAIIPTLRD). The chain crosses the membrane as a helical span at residues 162 to 182 (LIFYMTTLAFIVFCFLKFDKI). Residue glutamate 183 is a topological domain, extracellular. A helical membrane pass occupies residues 184 to 204 (VWMPATFLGIYGVYVVTVIIL). The Cytoplasmic portion of the chain corresponds to 205-398 (GIYRTHRKKR…PSRDEFSEMN (194 aa)). A helical transmembrane segment spans residues 399–419 (IFIKIVTVIKVVPVFFFKLTV). At 420–428 (PSNEMSWCK) the chain is on the extracellular side. The helical transmembrane segment at 429-449 (PLFILHCFASIQFALFSIQII) threads the bilayer. Residues 450–458 (TLKPFDGSP) lie on the Cytoplasmic side of the membrane. The helical transmembrane segment at 459–479 (GLWLYGLGFSAILAMVAMYFL) threads the bilayer. The Extracellular segment spans residues 480–486 (PLSKEQK). Residues 487-507 (YYKEIYSYLGFLMSIAWIYAT) traverse the membrane as a helical segment. Topologically, residues 508–510 (SNE) are cytoplasmic. Residues 511–531 (IVSVVTMIGVVTGLSMELLGL) form a helical membrane-spanning segment. Topologically, residues 532–559 (TIMAWSNCIGDIVADIAVVKQGYPKMAM) are extracellular. Residues 560 to 580 (AAAIGGPLFNLLIGFGLPFTI) form a helical membrane-spanning segment. Residues 581-595 (AAAQGKEMELLINPV) lie on the Cytoplasmic side of the membrane. Residues 596-616 (YRLLMLFLGISLVTTFVALFI) form a helical membrane-spanning segment. Over 617–626 (QRFTVRRPHA) the chain is Extracellular. The helical transmembrane segment at 627 to 647 (VLLIFIFVVFLIFICLAEFHV) threads the bilayer. At 648–651 (LEWN) the chain is on the cytoplasmic side.

Belongs to the Ca(2+):cation antiporter (CaCA) (TC 2.A.19) family. SLC24A subfamily. In terms of tissue distribution, expressed in the seam cells of the organism. Expression is visible in the seam cells across all larval stages, and expression persists into the adult stage of the organism.

Its subcellular location is the mitochondrion inner membrane. With respect to regulation, inhibited by the sodium/calcium exchanger inhibitor CGP-37157. In terms of biological role, mitochondrial sodium/calcium antiporter that mediates sodium-dependent calcium efflux from mitochondrion, thereby acting as a key regulator of mitochondrion calcium homeostasis. Required for patterning of neural circuits: functions in the same pathway as RAC-dependent effectors of the unc-6/netrin signaling pathway to set left/ right patterning of the VD/DD GABAergic circuit. The chain is Mitochondrial sodium/calcium exchanger protein from Caenorhabditis elegans.